Consider the following 417-residue polypeptide: Serpin H1 (417 aa).

The first 17 residues, 1–17 (MRSLLLGTLCLLAVALA), serve as a signal peptide directing secretion. Lys-93 is subject to N6-succinyllysine. Asn-119 and Asn-124 each carry an N-linked (GlcNAc...) asparagine glycan. Ser-140 carries the phosphoserine modification. An N6-acetyllysine modification is found at Lys-206. Position 295 is an N6-succinyllysine (Lys-295). The residue at position 318 (Lys-318) is an N6-acetyllysine. Asn-394 carries an N-linked (GlcNAc...) asparagine glycan. The short motif at 414 to 417 (RDEL) is the Prevents secretion from ER element.

The protein belongs to the serpin family.

It localises to the endoplasmic reticulum lumen. Binds specifically to collagen. Could be involved as a chaperone in the biosynthetic pathway of collagen. This chain is Serpin H1 (Serpinh1), found in Rattus norvegicus (Rat).